The chain runs to 216 residues: MRVILLGAPGAGKGTQAKFITEKFGIPQISTGDMLRAAVKAGTPLGLELKKVMDAGQLVSDELIISLVKERIAQPDCANGCLFDGFPRTIPQAEAMVAAGVDIDAVVEIAVDDEEIVGRMAGRRVHLASGRTYHIQYNPPKVEGKDDETGEDLIQRDDDKEETVRHRLSVYHSQTKPLVDFYQKLSAANGGKPKYSHIEGVGSVEAITAKVLAALS.

An ATP-binding site is contributed by 10–15 (GAGKGT). Residues 30 to 59 (STGDMLRAAVKAGTPLGLELKKVMDAGQLV) form an NMP region. AMP contacts are provided by residues Thr31, Arg36, 57-59 (QLV), 85-88 (GFPR), and Gln92. Residues 122–159 (GRRVHLASGRTYHIQYNPPKVEGKDDETGEDLIQRDDD) form an LID region. Residues Arg123 and 132 to 133 (TY) contribute to the ATP site. The AMP site is built by Arg156 and Arg167. Residue Gly202 participates in ATP binding.

It belongs to the adenylate kinase family. As to quaternary structure, monomer.

It is found in the cytoplasm. The catalysed reaction is AMP + ATP = 2 ADP. It participates in purine metabolism; AMP biosynthesis via salvage pathway; AMP from ADP: step 1/1. Catalyzes the reversible transfer of the terminal phosphate group between ATP and AMP. Plays an important role in cellular energy homeostasis and in adenine nucleotide metabolism. The protein is Adenylate kinase of Pseudomonas putida (strain ATCC 700007 / DSM 6899 / JCM 31910 / BCRC 17059 / LMG 24140 / F1).